The sequence spans 142 residues: Large ribosomal subunit protein uL16 (142 aa).

Belongs to the universal ribosomal protein uL16 family. In terms of assembly, part of the 50S ribosomal subunit.

Binds 23S rRNA and is also seen to make contacts with the A and possibly P site tRNAs. This Thermotoga sp. (strain RQ2) protein is Large ribosomal subunit protein uL16.